The chain runs to 625 residues: Protein arginine N-methyltransferase skb1 (625 aa).

Residues 280–588 enclose the SAM-dependent MTase PRMT-type domain; it reads LQVPLQPLSY…WRLTDGMRVW (309 aa). S-adenosyl-L-methionine-binding positions include Tyr-296, 305–306, Glu-359, and 386–387; these read KY and DM. Catalysis depends on proton donor/acceptor residues Glu-402 and Glu-411.

The protein belongs to the class I-like SAM-binding methyltransferase superfamily. Protein arginine N-methyltransferase family. In terms of assembly, interacts with the N-terminal regulatory domain of shk1. Shk1, cdc42 and skb1 are able to form a ternary complex in vivo. Interacts with orb6. Interacts with Cdr1 and the Cdr1 inhibitory target Wee1.

It localises to the nucleus. The protein localises to the cell tip. The protein resides in the cell septum. Its subcellular location is the cytoplasm. It is found in the cell cortex. Its function is as follows. S-adenosyl-L-methionine-dependent protein-arginine N-methyltransferase that can catalyze both the mono- and symmetric (type II) dimethylation of the guanidino nitrogens of arginine residues in target proteins. Delays mitotic entry by inhibiting the Cdr1-Wee1 signaling pathway. Cortical nodes sequester Skb1 from its regulatory targets Cdr1 and Wee1. Positively modulates the shk1 kinase function. May be a mediator of hyperosmotic stress response. Involved in the control of cell polarity by regulating the subcellular localization of Orb6 kinase. The polypeptide is Protein arginine N-methyltransferase skb1 (Schizosaccharomyces pombe (strain 972 / ATCC 24843) (Fission yeast)).